Reading from the N-terminus, the 63-residue chain is MVSMKQVERQKLNQKLMRAAATGDIEAVQKLVLRGADIYCRDHQGDTALSLAAGSGYLDILDI.

ANK repeat units lie at residues 11 to 43 (KLNQKLMRAAATGDIEAVQKLVLRGADIYCRDH) and 44 to 63 (QGDTALSLAAGSGYLDILDI).

The protein is Putative ankyrin repeat protein RF_p14 of Rickettsia felis (strain ATCC VR-1525 / URRWXCal2) (Rickettsia azadi).